The following is a 423-amino-acid chain: Protein disulfide isomerase-like 5-2 (423 aa).

Residues 1 to 35 form the signal peptide; sequence MAATTTRPLPLLLLLLLPPLLLLLLSFHAAAAAAA. Residues 36–149 enclose the Thioredoxin domain; it reads EEFPRDGRVI…LVRNLNKFVA (114 aa). Catalysis depends on nucleophile residues Cys71 and Cys74. A disulfide bond links Cys71 and Cys74. Asn181 is a glycosylation site (N-linked (GlcNAc...) asparagine). The chain crosses the membrane as a helical span at residues 386-406; the sequence is LVSLNSLYILICVFALLGVMI.

This sequence belongs to the protein disulfide isomerase family.

Its subcellular location is the membrane. Its function is as follows. Acts as a protein-folding catalyst that interacts with nascent polypeptides to catalyze the formation, isomerization, and reduction or oxidation of disulfide bonds. May play a role in storage protein biogenesis. The polypeptide is Protein disulfide isomerase-like 5-2 (PDIL5-2) (Oryza sativa subsp. japonica (Rice)).